An 89-amino-acid chain; its full sequence is Small ribosomal subunit protein uS17 (89 aa).

Belongs to the universal ribosomal protein uS17 family. As to quaternary structure, part of the 30S ribosomal subunit.

Its function is as follows. One of the primary rRNA binding proteins, it binds specifically to the 5'-end of 16S ribosomal RNA. The sequence is that of Small ribosomal subunit protein uS17 from Coxiella burnetii (strain RSA 331 / Henzerling II).